A 252-amino-acid polypeptide reads, in one-letter code: Small ribosomal subunit protein uS3 (252 aa).

In terms of domain architecture, KH type-2 spans 39–109; it reads IRNYVNTRLK…EVKIDVVEVV (71 aa). The segment covering 222–240 has biased composition (basic and acidic residues); sequence MKKIRDRRNDQRSRGGRDS. Residues 222 to 252 form a disordered region; the sequence is MKKIRDRRNDQRSRGGRDSRNKRRRRPKNTA. Residues 241-252 are compositionally biased toward basic residues; it reads RNKRRRRPKNTA.

It belongs to the universal ribosomal protein uS3 family. Part of the 30S ribosomal subunit. Forms a tight complex with proteins S10 and S14.

Functionally, binds the lower part of the 30S subunit head. Binds mRNA in the 70S ribosome, positioning it for translation. The chain is Small ribosomal subunit protein uS3 from Chlorobium phaeobacteroides (strain BS1).